The following is a 53-amino-acid chain: Small ribosomal subunit protein uS14 (53 aa).

Zn(2+) contacts are provided by Cys-17, Cys-20, Cys-36, and Cys-39.

This sequence belongs to the universal ribosomal protein uS14 family. Zinc-binding uS14 subfamily. In terms of assembly, part of the 30S ribosomal subunit. It depends on Zn(2+) as a cofactor.

In terms of biological role, binds 16S rRNA, required for the assembly of 30S particles. The protein is Small ribosomal subunit protein uS14 of Methanocaldococcus jannaschii (strain ATCC 43067 / DSM 2661 / JAL-1 / JCM 10045 / NBRC 100440) (Methanococcus jannaschii).